Consider the following 669-residue polypeptide: Exostosin-like 1 (669 aa).

At 1–8 (MLWRRKSF) the chain is on the cytoplasmic side. The chain crosses the membrane as a helical; Signal-anchor for type II membrane protein span at residues 9-29 (WLALSAFWLLLVLLGVFPLRL). The Lumenal portion of the chain corresponds to 30–669 (AVLPGPLPGR…RKKYRSLEKP (640 aa)). Asn263 and Asn480 each carry an N-linked (GlcNAc...) asparagine glycan. Residues Cys577 and Cys627 are joined by a disulfide bond. Residues 601–621 (RQHPEAVPMDSGDPRPVPEPQ) are disordered.

The protein belongs to the glycosyltransferase 47 family.

It is found in the endoplasmic reticulum membrane. The enzyme catalyses 3-O-{[(1-&gt;4)-beta-D-GlcA-(1-&gt;4)-alpha-D-GlcNAc](n)-(1-&gt;4)-beta-D-GlcA-(1-&gt;3)-beta-D-Gal-(1-&gt;3)-beta-D-Gal-(1-&gt;4)-beta-D-Xyl}-L-seryl-[protein] + UDP-N-acetyl-alpha-D-glucosamine = 3-O-{alpha-D-GlcNAc-[(1-&gt;4)-beta-D-GlcA-(1-&gt;4)-alpha-D-GlcNAc](n)-(1-&gt;4)-beta-D-GlcA-(1-&gt;3)-beta-D-Gal-(1-&gt;3)-beta-D-Gal-(1-&gt;4)-beta-D-Xyl}-L-seryl-[protein] + UDP + H(+). Its pathway is protein modification; protein glycosylation. Glycosyltransferase required for the biosynthesis of heparan-sulfate (HS). Transfers N-acetyl-alpha-D-glucosamine to the nascent HS chain (GlcNAcT-II activity). Appears to lack GlcNAcT I and GlcAT-II activities. This is Exostosin-like 1 (Extl1) from Mus musculus (Mouse).